Consider the following 424-residue polypeptide: GTPase Obg (424 aa).

Positions 1-158 constitute an Obg domain; it reads MFIDTAKIFV…RWIKLELKLL (158 aa). The OBG-type G domain maps to 159-331; that stretch reads ADVGLIGFPN…LMKEAARLLS (173 aa). GTP-binding positions include 165–172, 190–194, 212–215, 282–285, and 312–314; these read GFPNVGKS, FTTLK, DIPG, NKSD, and SAA. Mg(2+)-binding residues include serine 172 and threonine 192. Residues 345 to 424 form the OCT domain; sequence RFIEEEKRFT…LNDFEFDFLL (80 aa).

Belongs to the TRAFAC class OBG-HflX-like GTPase superfamily. OBG GTPase family. Monomer. The cofactor is Mg(2+).

The protein resides in the cytoplasm. In terms of biological role, an essential GTPase which binds GTP, GDP and possibly (p)ppGpp with moderate affinity, with high nucleotide exchange rates and a fairly low GTP hydrolysis rate. Plays a role in control of the cell cycle, stress response, ribosome biogenesis and in those bacteria that undergo differentiation, in morphogenesis control. The chain is GTPase Obg from Clostridium botulinum (strain Langeland / NCTC 10281 / Type F).